Reading from the N-terminus, the 227-residue chain is Holliday junction branch migration complex subunit RuvA (227 aa).

The tract at residues 1–64 (MFESISGILT…EDALRLFGFS (64 aa)) is domain I. The domain II stretch occupies residues 65-143 (NVQERTLFLS…LTDAASCAQS (79 aa)). The interval 144–158 (QTDDRAAHPSNLGCA) is flexible linker. The domain III stretch occupies residues 159-227 (PHAREIEDLV…HPHAVAPAAE (69 aa)).

The protein belongs to the RuvA family. In terms of assembly, homotetramer. Forms an RuvA(8)-RuvB(12)-Holliday junction (HJ) complex. HJ DNA is sandwiched between 2 RuvA tetramers; dsDNA enters through RuvA and exits via RuvB. An RuvB hexamer assembles on each DNA strand where it exits the tetramer. Each RuvB hexamer is contacted by two RuvA subunits (via domain III) on 2 adjacent RuvB subunits; this complex drives branch migration. In the full resolvosome a probable DNA-RuvA(4)-RuvB(12)-RuvC(2) complex forms which resolves the HJ.

It is found in the cytoplasm. The RuvA-RuvB-RuvC complex processes Holliday junction (HJ) DNA during genetic recombination and DNA repair, while the RuvA-RuvB complex plays an important role in the rescue of blocked DNA replication forks via replication fork reversal (RFR). RuvA specifically binds to HJ cruciform DNA, conferring on it an open structure. The RuvB hexamer acts as an ATP-dependent pump, pulling dsDNA into and through the RuvAB complex. HJ branch migration allows RuvC to scan DNA until it finds its consensus sequence, where it cleaves and resolves the cruciform DNA. This Treponema pallidum (strain Nichols) protein is Holliday junction branch migration complex subunit RuvA.